Reading from the N-terminus, the 591-residue chain is Transcriptional regulator PUL4 (591 aa).

A DNA-binding region (zn(2)-C6 fungal-type) is located at residues 3 to 29 (CLECKKRKQKCDGQKPCRRCTKLNVKC).

Its subcellular location is the nucleus. In terms of biological role, transcription factor involved in regulation of the PUL gene cluster that mediates the formation of pulcherrimin, a red iron-containing pigment composed of two cyclized and modified leucine molecules that acts as a siderophore, a chelator that binds iron outside the cell for subsequent uptake. The sequence is that of Transcriptional regulator PUL4 from Kluyveromyces lactis (strain ATCC 8585 / CBS 2359 / DSM 70799 / NBRC 1267 / NRRL Y-1140 / WM37) (Yeast).